A 120-amino-acid chain; its full sequence is Large ribosomal subunit protein bL17 (120 aa).

It belongs to the bacterial ribosomal protein bL17 family. In terms of assembly, part of the 50S ribosomal subunit. Contacts protein L32.

The sequence is that of Large ribosomal subunit protein bL17 from Mesomycoplasma hyopneumoniae (strain J / ATCC 25934 / NCTC 10110) (Mycoplasma hyopneumoniae).